The chain runs to 804 residues: Pentatricopeptide repeat-containing protein At4g35130, chloroplastic (804 aa).

The transit peptide at 1–19 directs the protein to the chloroplast; that stretch reads MAATLLSQCYRIYNSDACK. 16 PPR repeats span residues 63-93, 94-128, 129-163, 164-194, 195-229, 230-264, 266-296, 297-332, 333-363, 364-394, 395-429, 430-464, 465-495, 496-530, 531-561, and 567-597; these read NDPALTRALRGFADSRLMEDALQLFDEMNKA, DAFLWNVMIKGFTSCGLYIEAVQFYSRMVFAGVKA, DTFTYPFVIKSVAGISSLEEGKKIHAMVIKLGFVS, DVYVCNSLISLYMKLGCAWDAEKVFEEMPER, DIVSWNSMISGYLALGDGFSSLMLFKEMLKCGFKP, DRFSTMSALGACSHVYSPKMGKEIHCHAVRSRIET, DVMVMTSILDMYSKYGEVSYAERIFNGMIQR, NIVAWNVMIGCYARNGRVTDAFLCFQKMSEQNGLQP, DVITSINLLPASAILEGRTIHGYAMRRGFLP, HMVLETALIDMYGECGQLKSAEVIFDRMAEK, NVISWNSIIAAYVQNGKNYSALELFQELWDSSLVP, DSTTIASILPAYAESLSLSEGREIHAYIVKSRYWS, NTIILNSLVHMYAMCGDLEDARKCFNHILLK, DVVSWNSIIMAYAVHGFGRISVWLFSEMIASRVNP, NKSTFASLLAACSISGMVDEGWEYFESMKRE, and GIEHYGCMLDLIGRTGNFSAAKRFLEEMPFV. The type E motif stretch occupies residues 602–677; the sequence is IWGSLLNASR…TSSRSTVEAK (76 aa). The type E(+) motif stretch occupies residues 678-708; it reads GKSHVFTNGDRSHVATNKIYEVLDVVSRMVG. The interval 710-804 is type DYW motif; the sequence is EDIYVHCVSR…NGRCSCGNYW (95 aa).

Belongs to the PPR family. PCMP-H subfamily.

The protein resides in the plastid. Its subcellular location is the chloroplast. In Arabidopsis thaliana (Mouse-ear cress), this protein is Pentatricopeptide repeat-containing protein At4g35130, chloroplastic (PCMP-H27).